The chain runs to 136 residues: Mite allergen Der f 21.0101 (136 aa).

The signal sequence occupies residues M1–G17.

The protein belongs to the mite group 5 allergen family. In terms of assembly, monomer. Homodimer. Highly expressed in foregut (stomach), midgut and hindgut. Not expressed in body wall, reproductive system or body cavity.

The chain is Mite allergen Der f 21.0101 from Dermatophagoides farinae (American house dust mite).